We begin with the raw amino-acid sequence, 531 residues long: 2,3-bisphosphoglycerate-independent phosphoglycerate mutase (531 aa).

Residues Asp-13 and Ser-63 each coordinate Mn(2+). The active-site Phosphoserine intermediate is Ser-63. Residues His-124, 154 to 155 (RD), Arg-187, Arg-193, 261 to 264 (RPDR), and Lys-342 contribute to the substrate site. Asp-420, His-424, Asp-462, His-463, and His-480 together coordinate Mn(2+).

The protein belongs to the BPG-independent phosphoglycerate mutase family. In terms of assembly, monomer. Mn(2+) is required as a cofactor.

It carries out the reaction (2R)-2-phosphoglycerate = (2R)-3-phosphoglycerate. Its pathway is carbohydrate degradation; glycolysis; pyruvate from D-glyceraldehyde 3-phosphate: step 3/5. Its function is as follows. Catalyzes the interconversion of 2-phosphoglycerate and 3-phosphoglycerate. The polypeptide is 2,3-bisphosphoglycerate-independent phosphoglycerate mutase (Mycoplasma capricolum subsp. capricolum (strain California kid / ATCC 27343 / NCTC 10154)).